The sequence spans 161 residues: Endoribonuclease YbeY (161 aa).

Zn(2+) contacts are provided by His120, His124, and His130.

It belongs to the endoribonuclease YbeY family. Requires Zn(2+) as cofactor.

The protein resides in the cytoplasm. Single strand-specific metallo-endoribonuclease involved in late-stage 70S ribosome quality control and in maturation of the 3' terminus of the 16S rRNA. The polypeptide is Endoribonuclease YbeY (Erythrobacter litoralis (strain HTCC2594)).